The following is a 419-amino-acid chain: MGMTMTQKILAAHAGLEAVKAGQLIEANLDLVLGNDITTPVAVNEFKKFGTDKVFSKSQIAIVPDHFTPNKDIKAAEQVKYIREFAQNMEIENFFEVGEMGIEHCLLPEKGLVVAGDVVIGADSHTCTYGALGAFSTGIGSTDMAAGMATGKCWFKVPSALKFVLKNKPAKWISGKDIILHIIGMIGVDGALYKSMEFVGDGLQYLSMDDRFTMANMAIEAGGKNGIFPVDDKTEEYLKDHASREWKVYEADEDAEYDKVFEIDLSELRPTVSFPHLPDNTRTIDNTGDVAIDQVVIGSCTNGRISDLRMARDILKGKKVKKGIRCIVIPGTQKIYLQAIKEGIVTDLVEAGAAFSTPTCGPCLGGHMGILAKGERCVSTTNRNFVGRMGHVESEVYLASPAVAAASALTGKITDPELV.

[4Fe-4S] cluster is bound by residues Cys300, Cys360, and Cys363.

The protein belongs to the aconitase/IPM isomerase family. LeuC type 2 subfamily. Heterodimer of LeuC and LeuD. Requires [4Fe-4S] cluster as cofactor.

It carries out the reaction (2R,3S)-3-isopropylmalate = (2S)-2-isopropylmalate. The protein operates within amino-acid biosynthesis; L-leucine biosynthesis; L-leucine from 3-methyl-2-oxobutanoate: step 2/4. Catalyzes the isomerization between 2-isopropylmalate and 3-isopropylmalate, via the formation of 2-isopropylmaleate. This chain is 3-isopropylmalate dehydratase large subunit, found in Clostridium beijerinckii (strain ATCC 51743 / NCIMB 8052) (Clostridium acetobutylicum).